The sequence spans 105 residues: ATP-dependent Clp protease adapter protein ClpS (105 aa).

This sequence belongs to the ClpS family. In terms of assembly, binds to the N-terminal domain of the chaperone ClpA.

In terms of biological role, involved in the modulation of the specificity of the ClpAP-mediated ATP-dependent protein degradation. This is ATP-dependent Clp protease adapter protein ClpS from Streptomyces avermitilis (strain ATCC 31267 / DSM 46492 / JCM 5070 / NBRC 14893 / NCIMB 12804 / NRRL 8165 / MA-4680).